The chain runs to 158 residues: Large ribosomal subunit protein uL16 (158 aa).

The segment at 1 to 22 is disordered; sequence MLSPKRTKYRKQQRGRMKGKAT.

It belongs to the universal ribosomal protein uL16 family. In terms of assembly, part of the 50S ribosomal subunit.

Its function is as follows. Binds 23S rRNA and is also seen to make contacts with the A and possibly P site tRNAs. In Synechococcus sp. (strain JA-3-3Ab) (Cyanobacteria bacterium Yellowstone A-Prime), this protein is Large ribosomal subunit protein uL16.